The chain runs to 519 residues: Glucoamylase GLU1 (519 aa).

The N-terminal stretch at 1 to 27 is a signal peptide; that stretch reads MKFGVLFSVFAAIVSALPLQEGPLNKR. Asparagine 115 and asparagine 127 each carry an N-linked (GlcNAc...) asparagine glycan. Tryptophan 166 contacts substrate. An N-linked (GlcNAc...) asparagine glycan is attached at asparagine 205. The Proton acceptor role is filled by aspartate 234. Glutamate 237 (proton donor) is an active-site residue.

Belongs to the glycosyl hydrolase 15 family.

The enzyme catalyses Hydrolysis of terminal (1-&gt;4)-linked alpha-D-glucose residues successively from non-reducing ends of the chains with release of beta-D-glucose.. The sequence is that of Glucoamylase GLU1 (GLU1) from Saccharomycopsis fibuligera (Yeast).